The sequence spans 450 residues: Phosphoglucosamine mutase (450 aa).

Residue serine 102 is the Phosphoserine intermediate of the active site. Mg(2+)-binding residues include serine 102, aspartate 243, aspartate 245, and aspartate 247. Position 102 is a phosphoserine (serine 102).

The protein belongs to the phosphohexose mutase family. Mg(2+) is required as a cofactor. In terms of processing, activated by phosphorylation.

It carries out the reaction alpha-D-glucosamine 1-phosphate = D-glucosamine 6-phosphate. In terms of biological role, catalyzes the conversion of glucosamine-6-phosphate to glucosamine-1-phosphate. This chain is Phosphoglucosamine mutase, found in Rhizobium johnstonii (strain DSM 114642 / LMG 32736 / 3841) (Rhizobium leguminosarum bv. viciae).